The chain runs to 413 residues: Peptidase T (413 aa).

H81 is a binding site for Zn(2+). Residue D83 is part of the active site. D143 is a binding site for Zn(2+). The active-site Proton acceptor is the E178. Residues E179, D201, and H383 each coordinate Zn(2+).

Belongs to the peptidase M20B family. Zn(2+) serves as cofactor.

It is found in the cytoplasm. It catalyses the reaction Release of the N-terminal residue from a tripeptide.. Cleaves the N-terminal amino acid of tripeptides. The polypeptide is Peptidase T (Lactococcus lactis subsp. hordniae).